We begin with the raw amino-acid sequence, 146 residues long: Hemoglobin subunit beta (146 aa).

In terms of domain architecture, Globin spans 2-146 (HWTETERATI…VVAALSREYH (145 aa)). 2 residues coordinate heme b: histidine 63 and histidine 92.

It belongs to the globin family. In terms of assembly, heterotetramer of two alpha chains and two beta chains (an easy dimerization is also reported). As to expression, red blood cells.

Involved in oxygen transport from the lung to the various peripheral tissues. In Latimeria chalumnae (Coelacanth), this protein is Hemoglobin subunit beta (HBB).